Reading from the N-terminus, the 296-residue chain is Protoheme IX farnesyltransferase 2 (296 aa).

The next 9 helical transmembrane spans lie at 7-27 (LLVAKPGIIFGNLIAVAGGYF), 36-56 (PMLLLATVIGLSLVVASGCVL), 83-103 (LKAALAHGLVLGVAGFGLLWW), 108-128 (LTTALAGFGYFVYVGLYSLWF), 134-154 (YGTLVGSLSGAMPPVVGYCAV), 163-183 (ASLLAIFCLWQMPHSYAIAIF), 207-227 (IHIVLYILAFMAATLALCLGG), 229-249 (AGYGYLLVAVAVSLWWLAIAL), and 265-285 (FAFSIVAITALSVMMSIDFQV).

The protein belongs to the UbiA prenyltransferase family. Protoheme IX farnesyltransferase subfamily.

It is found in the cell inner membrane. The enzyme catalyses heme b + (2E,6E)-farnesyl diphosphate + H2O = Fe(II)-heme o + diphosphate. It functions in the pathway porphyrin-containing compound metabolism; heme O biosynthesis; heme O from protoheme: step 1/1. Functionally, converts heme B (protoheme IX) to heme O by substitution of the vinyl group on carbon 2 of heme B porphyrin ring with a hydroxyethyl farnesyl side group. In Pseudomonas aeruginosa (strain UCBPP-PA14), this protein is Protoheme IX farnesyltransferase 2.